The primary structure comprises 345 residues: Biotin synthase (345 aa).

The Radical SAM core domain occupies Asn-59–Arg-286. The [4Fe-4S] cluster site is built by Cys-74, Cys-78, and Cys-81. [2Fe-2S] cluster contacts are provided by Cys-118, Cys-149, Cys-209, and Arg-281.

It belongs to the radical SAM superfamily. Biotin synthase family. As to quaternary structure, homodimer. [4Fe-4S] cluster serves as cofactor. [2Fe-2S] cluster is required as a cofactor.

The enzyme catalyses (4R,5S)-dethiobiotin + (sulfur carrier)-SH + 2 reduced [2Fe-2S]-[ferredoxin] + 2 S-adenosyl-L-methionine = (sulfur carrier)-H + biotin + 2 5'-deoxyadenosine + 2 L-methionine + 2 oxidized [2Fe-2S]-[ferredoxin]. It functions in the pathway cofactor biosynthesis; biotin biosynthesis; biotin from 7,8-diaminononanoate: step 2/2. Its function is as follows. Catalyzes the conversion of dethiobiotin (DTB) to biotin by the insertion of a sulfur atom into dethiobiotin via a radical-based mechanism. This Leptothrix cholodnii (strain ATCC 51168 / LMG 8142 / SP-6) (Leptothrix discophora (strain SP-6)) protein is Biotin synthase.